The chain runs to 3412 residues: Genome polyprotein (3412 aa).

The tract at residues 1–30 (MAGKAILKGKGGGPPRRVSKETAKKTRQSR) is disordered. Topologically, residues 1–98 (MAGKAILKGK…LQRRGKRRSA (98 aa)) are cytoplasmic. Residues 97–117 (SAVDWTGWLLVVVLLGVTLAA) constitute a propeptide, ER anchor for the capsid protein C, removed in mature form by serine protease NS3. The helical transmembrane segment at 99-119 (VDWTGWLLVVVLLGVTLAATV) threads the bilayer. Over 120–242 (RKERDGTTVI…HLTRVEGWVW (123 aa)) the chain is Extracellular. The N-linked (GlcNAc...) asparagine; by host glycan is linked to asparagine 144. The helical transmembrane segment at 243 to 260 (KNKVLTLAVIAVVWLTVE) threads the bilayer. Position 261 (serine 261) is a topological domain, cytoplasmic. Residues 262–280 (VVTRVAVVVVLLCLAPVYA) traverse the membrane as a helical segment. At 281–727 (SRCTHLENRD…HTVLGGAFNS (447 aa)) the chain is on the extracellular side. Intrachain disulfides connect cysteine 283–cysteine 310, cysteine 340–cysteine 396, cysteine 340–cysteine 401, cysteine 354–cysteine 385, cysteine 372–cysteine 396, and cysteine 372–cysteine 401. The interval 378–391 (DRGWGNHCGLFGKG) is fusion peptide. N-linked (GlcNAc...) asparagine; by host glycosylation is present at asparagine 434. 2 cysteine pairs are disulfide-bonded: cysteine 466/cysteine 570 and cysteine 587/cysteine 618. Residues 728–748 (LFGGVGFLPKILVGVVLAWLG) traverse the membrane as a helical segment. Residues 749 to 755 (LNMRNPT) lie on the Cytoplasmic side of the membrane. Residues 756–776 (MSMSFLLAGGLVLAMTLGVGA) traverse the membrane as a helical segment. Residues 777 to 1187 (DVGCAVDTER…LVKIESLVRY (411 aa)) lie on the Extracellular side of the membrane. Cystine bridges form between cysteine 780-cysteine 791, cysteine 831-cysteine 920, cysteine 955-cysteine 1000, cysteine 1057-cysteine 1106, cysteine 1068-cysteine 1090, and cysteine 1089-cysteine 1093. Asparagine 861, asparagine 983, and asparagine 999 each carry an N-linked (GlcNAc...) asparagine; by host glycan. A helical transmembrane segment spans residues 1188-1208 (VVAVGITFHLELGPEIVALTL). The Cytoplasmic segment spans residues 1209 to 1236 (LQAVFELRVGLLSAFALRSNLTVREMVT). A helical transmembrane segment spans residues 1237-1257 (IYFLLLVLELGLPSEGLGALW). Over 1258–1293 (KWGDALAMGALIFRACTAEEKTGVGLLLMALMTQQD) the chain is Lumenal. Residues 1294–1314 (LATVHYGLMLFLGVASCCSIW) form a helical membrane-spanning segment. At 1315–1327 (KLIRGHREQKGLT) the chain is on the cytoplasmic side. The chain crosses the membrane as a helical span at residues 1328-1348 (WIVPLAGLLGGEGSGVRLVAF). Topologically, residues 1349–1359 (WELTVHGRRRS) are cytoplasmic. The chain crosses the membrane as a helical span at residues 1360–1378 (FSEPLTVVGVMLTLASGMI). The Lumenal portion of the chain corresponds to 1379-1382 (RHTS). Residues 1383 to 1403 (QEALCALAVASFLLLMLVLGT) traverse the membrane as a helical segment. The Cytoplasmic segment spans residues 1404-1454 (RKMQLVAEWSGCVEWHPELMNEGGEVSLRVRQDSMGNFHLTELEKEERVMA). Residues 1410–1449 (AEWSGCVEWHPELMNEGGEVSLRVRQDSMGNFHLTELEKE) are interacts with and activates NS3 protease. An intramembrane region (helical) is located at residues 1455-1475 (FWLLAGLAASAFHWSGILGVM). Residues 1476–2160 (GLWTLSEMLR…KMAERDAPEA (685 aa)) lie on the Cytoplasmic side of the membrane. Positions 1490-1669 (SGLVFSGQGG…EAEKSRPNLP (180 aa)) constitute a Peptidase S7 domain. Active-site charge relay system; for serine protease NS3 activity residues include histidine 1543, aspartate 1567, and serine 1627. In terms of domain architecture, Helicase ATP-binding spans 1675-1831 (TGWTAKGQIT…ESNGAISSEE (157 aa)). An ATP-binding site is contributed by 1688-1695 (MHPGSGKT). Residues 1779-1782 (DEAH) carry the DEAH box motif. The 160-residue stretch at 1841–2000 (DGFDWITEYE…TLRGPVATFY (160 aa)) folds into the Helicase C-terminal domain. Lysine 1883 is modified (N6-acetyllysine; by host). A helical membrane pass occupies residues 2161–2181 (FLTVVEMMVLGLATLGVVWCF). The Lumenal segment spans residues 2182–2189 (VVRTSISR). The helical intramembrane region spans 2190 to 2210 (MMLGTLVLLASLALLWAGGVS). A topological domain (lumenal) is located at residue tyrosine 2211. Residues 2212-2232 (GNMAGVALIFYTLLTVLQPEA) form a helical membrane-spanning segment. Residues 2233 to 2244 (GKQRSSDDNKLA) are Cytoplasmic-facing. A helical transmembrane segment spans residues 2245-2265 (YFLLTLCSLAGLVAANEMGFL). At 2266–2299 (EKTKADLSTVLWSEHEELRSWEEWTNIDIQPARS) the chain is on the lumenal side. Residues 2300–2320 (WGTYVLVVSLFTPYIIHQLQT) constitute an intramembrane region (helical). Residues 2321–2343 (KIQQLVNSAVATGAQAMRDLGGG) lie on the Lumenal side of the membrane. An intramembrane region (helical) is located at residues 2344–2364 (APFFGVAGHVMALGVVSLVGA). The Lumenal portion of the chain corresponds to 2365 to 2368 (TPTS). A helical membrane pass occupies residues 2369-2389 (LVVGVGLAAFHLAIVVSGLEA). Over 2390-2430 (ELTQRAHKVFFSAMVRNPMVDGDVINPFGEGEAKPALYERK) the chain is Cytoplasmic. Residues 2431-2451 (MSLVLAIVLCLMSVVMNRTVP) traverse the membrane as a helical segment. The Lumenal portion of the chain corresponds to 2452-2476 (STPRLLLWDWRQRDNCSNQRRTPFG). The chain crosses the membrane as a helical span at residues 2477–2497 (RCQACGLSGVVRGSLWGFCPL). Residues 2498 to 3412 (GHRLWLRASG…WESKLESSII (915 aa)) lie on the Cytoplasmic side of the membrane. The region spanning 2511-2775 (GGSEGDTLGD…ELDLGVGTRC (265 aa)) is the mRNA cap 0-1 NS5-type MT domain. Serine 2566 is a binding site for S-adenosyl-L-methionine. The residue at position 2566 (serine 2566) is a Phosphoserine. The active-site For 2'-O-MTase activity is lysine 2571. Positions 2596, 2597, 2615, 2641, and 2642 each coordinate S-adenosyl-L-methionine. Aspartate 2656 serves as the catalytic For 2'-O-MTase activity. Isoleucine 2657 is an S-adenosyl-L-methionine binding site. Catalysis depends on for 2'-O-MTase activity residues lysine 2693 and glutamate 2729. The segment at 2729-2733 (EMYYS) is interaction with host SCRIB. Tyrosine 2731 contributes to the S-adenosyl-L-methionine binding site. Zn(2+) is bound by residues glutamate 2948, histidine 2952, cysteine 2957, and cysteine 2960. The RdRp catalytic domain occupies 3038–3187 (GLFYADDTAG…RPVDDRFSGA (150 aa)). Positions 3222, 3238, and 3357 each coordinate Zn(2+).

It in the N-terminal section; belongs to the class I-like SAM-binding methyltransferase superfamily. mRNA cap 0-1 NS5-type methyltransferase family. As to quaternary structure, homodimer. Interacts (via N-terminus) with host EXOC1 (via C-terminus); this interaction results in EXOC1 degradation through the proteasome degradation pathway. Forms heterodimers with envelope protein E in the endoplasmic reticulum and Golgi. In terms of assembly, homodimer; in the endoplasmic reticulum and Golgi. Interacts with protein prM. Interacts with non-structural protein 1. As to quaternary structure, homodimer; Homohexamer when secreted. Interacts with envelope protein E. Interacts (via N-terminus) with serine protease NS3. In terms of assembly, forms a heterodimer with serine protease NS3. May form homooligomers. As to quaternary structure, forms a heterodimer with NS2B. Interacts with non-structural protein 2A (via N-terminus). Interacts with NS4B. Interacts with unphosphorylated RNA-directed RNA polymerase NS5; this interaction stimulates RNA-directed RNA polymerase NS5 guanylyltransferase activity. Interacts with serine protease NS3. Interacts with NS1. In terms of assembly, homodimer. Interacts with host STAT2; this interaction inhibits the phosphorylation of the latter, and, when all viral proteins are present (polyprotein), targets STAT2 for degradation. Interacts with serine protease NS3. Interacts with host SCRIB; this interaction targets NS5 to the cell membrane periphery and nucleus, thereby allowing efficient host nuclear STAT1 inhibition. Specific enzymatic cleavages in vivo yield mature proteins. Cleavages in the lumen of endoplasmic reticulum are performed by host signal peptidase, whereas cleavages in the cytoplasmic side are performed by serine protease NS3. Signal cleavage at the 2K-4B site requires a prior NS3 protease-mediated cleavage at the 4A-2K site. In terms of processing, cleaved in post-Golgi vesicles by a host furin, releasing the mature small envelope protein M, and peptide pr. This cleavage is incomplete as up to 30% of viral particles still carry uncleaved prM. Post-translationally, N-glycosylated. N-glycosylated. The excreted form is glycosylated and this is required for efficient secretion of the protein from infected cells. In terms of processing, acetylated by host KAT5. Acetylation modulates NS3 RNA-binding and unwinding activities and plays an important positive role for viral replication. Post-translationally, phosphorylated on serines residues. This phosphorylation may trigger NS5 nuclear localization.

Its subcellular location is the virion. The protein resides in the host nucleus. It is found in the host cytoplasm. It localises to the host perinuclear region. The protein localises to the secreted. Its subcellular location is the virion membrane. The protein resides in the host endoplasmic reticulum membrane. It catalyses the reaction Selective hydrolysis of -Xaa-Xaa-|-Yaa- bonds in which each of the Xaa can be either Arg or Lys and Yaa can be either Ser or Ala.. It carries out the reaction RNA(n) + a ribonucleoside 5'-triphosphate = RNA(n+1) + diphosphate. The catalysed reaction is a ribonucleoside 5'-triphosphate + H2O = a ribonucleoside 5'-diphosphate + phosphate + H(+). The enzyme catalyses ATP + H2O = ADP + phosphate + H(+). It catalyses the reaction a 5'-end (5'-triphosphoguanosine)-ribonucleoside in mRNA + S-adenosyl-L-methionine = a 5'-end (N(7)-methyl 5'-triphosphoguanosine)-ribonucleoside in mRNA + S-adenosyl-L-homocysteine. It carries out the reaction a 5'-end (N(7)-methyl 5'-triphosphoguanosine)-ribonucleoside in mRNA + S-adenosyl-L-methionine = a 5'-end (N(7)-methyl 5'-triphosphoguanosine)-(2'-O-methyl-ribonucleoside) in mRNA + S-adenosyl-L-homocysteine + H(+). Functionally, plays a role in virus budding by binding to the cell membrane and gathering the viral RNA into a nucleocapsid that forms the core of a mature virus particle. During virus entry, may induce genome penetration into the host cytoplasm after hemifusion induced by the surface proteins. Can migrate to the cell nucleus where it modulates host functions. In terms of biological role, inhibits RNA silencing by interfering with host Dicer. Prevents premature fusion activity of envelope proteins in trans-Golgi by binding to envelope protein E at pH6.0. After virion release in extracellular space, gets dissociated from E dimers. Its function is as follows. Acts as a chaperone for envelope protein E during intracellular virion assembly by masking and inactivating envelope protein E fusion peptide. prM is the only viral peptide matured by host furin in the trans-Golgi network probably to avoid catastrophic activation of the viral fusion activity in acidic Golgi compartment prior to virion release. prM-E cleavage is inefficient, and many virions are only partially matured. These uncleaved prM would play a role in immune evasion. Functionally, may play a role in virus budding. Exerts cytotoxic effects by activating a mitochondrial apoptotic pathway through M ectodomain. May display a viroporin activity. In terms of biological role, binds to host cell surface receptor and mediates fusion between viral and cellular membranes. Envelope protein is synthesized in the endoplasmic reticulum in the form of heterodimer with protein prM. They play a role in virion budding in the ER, and the newly formed immature particle is covered with 60 spikes composed of heterodimer between precursor prM and envelope protein E. The virion is transported to the Golgi apparatus where the low pH causes dissociation of PrM-E heterodimers and formation of E homodimers. prM-E cleavage is inefficient, and many virions are only partially matured. These uncleaved prM would play a role in immune evasion. Involved in immune evasion, pathogenesis and viral replication. Once cleaved off the polyprotein, is targeted to three destinations: the viral replication cycle, the plasma membrane and the extracellular compartment. Essential for viral replication. Required for formation of the replication complex and recruitment of other non-structural proteins to the ER-derived membrane structures. Excreted as a hexameric lipoparticle that plays a role against host immune response. Antagonizing the complement function. Binds to the host macrophages and dendritic cells. Inhibits signal transduction originating from Toll-like receptor 3 (TLR3). Its function is as follows. Component of the viral RNA replication complex that functions in virion assembly and antagonizes the host immune response. Functionally, required cofactor for the serine protease function of NS3. May have membrane-destabilizing activity and form viroporins. In terms of biological role, displays three enzymatic activities: serine protease, NTPase and RNA helicase. NS3 serine protease, in association with NS2B, performs its autocleavage and cleaves the polyprotein at dibasic sites in the cytoplasm: C-prM, NS2A-NS2B, NS2B-NS3, NS3-NS4A, NS4A-2K and NS4B-NS5. NS3 RNA helicase binds RNA and unwinds dsRNA in the 3' to 5' direction. Regulates the ATPase activity of the NS3 helicase activity. NS4A allows NS3 helicase to conserve energy during unwinding. Its function is as follows. Functions as a signal peptide for NS4B and is required for the interferon antagonism activity of the latter. Functionally, induces the formation of ER-derived membrane vesicles where the viral replication takes place. Inhibits interferon (IFN)-induced host STAT1 phosphorylation and nuclear translocation, thereby preventing the establishment of cellular antiviral state by blocking the IFN-alpha/beta pathway. Inhibits STAT2 translocation in the nucleus after IFN-alpha treatment. In terms of biological role, replicates the viral (+) and (-) genome, and performs the capping of genomes in the cytoplasm. NS5 methylates viral RNA cap at guanine N-7 and ribose 2'-O positions. Besides its role in RNA genome replication, also prevents the establishment of cellular antiviral state by blocking the interferon-alpha/beta (IFN-alpha/beta) signaling pathway. Inhibits host TYK2 and STAT2 phosphorylation, thereby preventing activation of JAK-STAT signaling pathway. The protein is Genome polyprotein of Homo sapiens (Human).